Consider the following 233-residue polypeptide: Triosephosphate isomerase (233 aa).

Substrate is bound at residue 8–10; the sequence is NWK. Residue H91 is the Electrophile of the active site. E155 acts as the Proton acceptor in catalysis. Residues G161 and S192 each coordinate substrate.

It belongs to the triosephosphate isomerase family. Homodimer.

It localises to the cytoplasm. The catalysed reaction is D-glyceraldehyde 3-phosphate = dihydroxyacetone phosphate. It functions in the pathway carbohydrate biosynthesis; gluconeogenesis. It participates in carbohydrate degradation; glycolysis; D-glyceraldehyde 3-phosphate from glycerone phosphate: step 1/1. In terms of biological role, involved in the gluconeogenesis. Catalyzes stereospecifically the conversion of dihydroxyacetone phosphate (DHAP) to D-glyceraldehyde-3-phosphate (G3P). This Wolbachia sp. subsp. Brugia malayi (strain TRS) protein is Triosephosphate isomerase.